The primary structure comprises 564 residues: Hexose transporter HXT13 (564 aa).

Topologically, residues 1–52 (MSSAQSSIDSDGDVRDADIHVAPPVEKEWSDGFDDNEVINGDNVEPPKRGLI) are cytoplasmic. A helical membrane pass occupies residues 53-73 (GYLVIYLLCYPISFGGFLPGW). Over 74 to 109 (DSGITAGFINMDNFKMNFGSYKHSTGEYYLSNVRMG) the chain is Extracellular. A helical transmembrane segment spans residues 110-130 (LLVAMFSIGCAIGGLIFARLA). At 131–136 (DTLGRR) the chain is on the cytoplasmic side. The helical transmembrane segment at 137 to 157 (LAIVIVVLVYMVGAIIQISSN) threads the bilayer. Topologically, residues 158-167 (HKWYQYFVGK) are extracellular. Residues 168 to 188 (IIYGLGAGGCSVLCPMLLSEI) traverse the membrane as a helical segment. The Cytoplasmic portion of the chain corresponds to 189–194 (APTDLR). Residues 195-215 (GGLVSLYQLNMTFGIFLGYCS) traverse the membrane as a helical segment. At 216 to 229 (VYGTRKYDNTAQWR) the chain is on the extracellular side. The chain crosses the membrane as a helical span at residues 230-250 (VPLGLCFLWALIIIIGMLLVP). Topologically, residues 251–333 (ESPRYLIECE…VQTFLQLTGE (83 aa)) are cytoplasmic. The helical transmembrane segment at 334–350 (NYFFFYGTTIFKSVGLT) threads the bilayer. Residues 351 to 356 (DGFETS) are Extracellular-facing. The helical transmembrane segment at 357–374 (IVLGTVNFFSTIIAVMVV) threads the bilayer. At 375–381 (DKIGRRK) the chain is on the cytoplasmic side. The chain crosses the membrane as a helical span at residues 382-402 (CLLFGAAGMMACMVIFASIGV). Over 403-424 (KCLYPHGQDGPSSKGAGNAMIV) the chain is Extracellular. A helical membrane pass occupies residues 425-445 (FTCFYIFCFATTWAPVAYIVV). Residues 446–462 (AESFPSKVKSRAMSIST) lie on the Cytoplasmic side of the membrane. A helical transmembrane segment spans residues 463–483 (ACNWLWQFLIGFFTPFITGSI). A topological domain (extracellular) is located at residue H484. A helical membrane pass occupies residues 485 to 505 (FYYGYVFVGCLVAMFLYVFFF). The Cytoplasmic portion of the chain corresponds to 506 to 564 (LPETIGLSLEEIQLLYEEGIKPWKSASWVPPSRRGISSEESKTEKKDWKKFLKFSKNSD). Residues 530-551 (SASWVPPSRRGISSEESKTEKK) are disordered. The span at 541–551 (ISSEESKTEKK) shows a compositional bias: basic and acidic residues.

The protein belongs to the major facilitator superfamily. Sugar transporter (TC 2.A.1.1) family.

It is found in the membrane. Its function is as follows. Probable glucose transporter. The polypeptide is Hexose transporter HXT13 (HXT13) (Saccharomyces cerevisiae (strain ATCC 204508 / S288c) (Baker's yeast)).